A 142-amino-acid polypeptide reads, in one-letter code: MVLSSADKNNVKACWGKIGSHAGEYGAEALERTFCSFPTTKTYFPHFDLSHGSAQVQAHGQKVADALTKAVVHINDLPNALSDLSDLHAYKLRVDPVNFKFLSHCLLVTLACHHPEEFTPAVHASLDKFFSAVSTVLTSKYR.

Residues 2-142 enclose the Globin domain; the sequence is VLSSADKNNV…VSTVLTSKYR (141 aa). Ser-4 is subject to Phosphoserine. Lys-8 and Lys-12 each carry N6-succinyllysine. Lys-17 bears the N6-acetyllysine; alternate mark. Lys-17 carries the post-translational modification N6-succinyllysine; alternate. The residue at position 25 (Tyr-25) is a Phosphotyrosine. Residue Ser-36 is modified to Phosphoserine. Residue Lys-41 is modified to N6-succinyllysine. Ser-50 is subject to Phosphoserine. His-59 contributes to the O2 binding site. A heme b-binding site is contributed by His-88. The residue at position 103 (Ser-103) is a Phosphoserine. Phosphothreonine is present on Thr-109. Residue Ser-125 is modified to Phosphoserine. Thr-135 and Thr-138 each carry phosphothreonine. Ser-139 is subject to Phosphoserine.

The protein belongs to the globin family. As to quaternary structure, heterotetramer of two alpha chains and two beta chains. As to expression, red blood cells.

Functionally, involved in oxygen transport from the lung to the various peripheral tissues. In terms of biological role, hemopressin acts as an antagonist peptide of the cannabinoid receptor CNR1. Hemopressin-binding efficiently blocks cannabinoid receptor CNR1 and subsequent signaling. The sequence is that of Hemoglobin subunit alpha (HBA) from Panthera leo (Lion).